Reading from the N-terminus, the 813-residue chain is Lon protease (813 aa).

The region spanning 30 to 225 is the Lon N-terminal domain; the sequence is LPILPVRNIV…WLLQLMDKDI (196 aa). 376-383 serves as a coordination point for ATP; sequence GPPGVGKT. Positions 612 to 793 constitute a Lon proteolytic domain; the sequence is DDLAGIVTGL…DEVLAIALLK (182 aa). Active-site residues include Ser-699 and Lys-742.

It belongs to the peptidase S16 family. In terms of assembly, homohexamer. Organized in a ring with a central cavity.

Its subcellular location is the cytoplasm. It catalyses the reaction Hydrolysis of proteins in presence of ATP.. Its function is as follows. ATP-dependent serine protease that mediates the selective degradation of mutant and abnormal proteins as well as certain short-lived regulatory proteins. Required for cellular homeostasis and for survival from DNA damage and developmental changes induced by stress. Degrades polypeptides processively to yield small peptide fragments that are 5 to 10 amino acids long. Binds to DNA in a double-stranded, site-specific manner. The protein is Lon protease of Cytophaga hutchinsonii (strain ATCC 33406 / DSM 1761 / CIP 103989 / NBRC 15051 / NCIMB 9469 / D465).